Consider the following 327-residue polypeptide: Tetraacyldisaccharide 4'-kinase (327 aa).

52–59 contacts ATP; the sequence is TAGGAGKT.

It belongs to the LpxK family.

The catalysed reaction is a lipid A disaccharide + ATP = a lipid IVA + ADP + H(+). Its pathway is glycolipid biosynthesis; lipid IV(A) biosynthesis; lipid IV(A) from (3R)-3-hydroxytetradecanoyl-[acyl-carrier-protein] and UDP-N-acetyl-alpha-D-glucosamine: step 6/6. Functionally, transfers the gamma-phosphate of ATP to the 4'-position of a tetraacyldisaccharide 1-phosphate intermediate (termed DS-1-P) to form tetraacyldisaccharide 1,4'-bis-phosphate (lipid IVA). This is Tetraacyldisaccharide 4'-kinase from Gluconacetobacter diazotrophicus (strain ATCC 49037 / DSM 5601 / CCUG 37298 / CIP 103539 / LMG 7603 / PAl5).